Consider the following 600-residue polypeptide: uncharacterized protein (600 aa).

2 4Fe-4S ferredoxin-type domains span residues Arg14–Lys44 and Gly53–Leu82. ABC transporter domains are found at residues Ile77–Gly318 and Leu348–Met563. ATP-binding positions include Gly117–Ser124 and Gly380–Thr387. A compositionally biased stretch (basic and acidic residues) spans Arg569–Glu594. Residues Arg569–Glu600 are disordered.

This sequence belongs to the ABC transporter superfamily.

This is an uncharacterized protein from Methanocaldococcus jannaschii (strain ATCC 43067 / DSM 2661 / JAL-1 / JCM 10045 / NBRC 100440) (Methanococcus jannaschii).